A 727-amino-acid polypeptide reads, in one-letter code: NADH-ubiquinone oxidoreductase 75 kDa subunit, mitochondrial (727 aa).

The transit peptide at 1 to 23 (MLRIPIKRALIGLSNSPKGYVRT) directs the protein to the mitochondrion. Positions 30-108 (NLIEVFVDGQ…GWNILTNSEK (79 aa)) constitute a 2Fe-2S ferredoxin-type domain. 3 residues coordinate [2Fe-2S] cluster: cysteine 64, cysteine 75, and cysteine 78. Lysine 84 bears the N6-acetyllysine mark. Residue cysteine 92 coordinates [2Fe-2S] cluster. Residues 108–147 (KSKKAREGVMEFLLANHPLDCPICDQGGECDLQDQSMMFG) form the 4Fe-4S His(Cys)3-ligated-type domain. Residues histidine 124, cysteine 128, cysteine 131, cysteine 137, cysteine 176, cysteine 179, cysteine 182, and cysteine 226 each contribute to the [4Fe-4S] cluster site. The 4Fe-4S Mo/W bis-MGD-type domain maps to 245–301 (TRKTESIDVMDAVGSNIVVSTRTGEVMRILPRMHEDINEEWISDKTRFAYDGLKRQR). Residue serine 461 is modified to Phosphoserine. N6-acetyllysine is present on residues lysine 467, lysine 499, and lysine 709.

This sequence belongs to the complex I 75 kDa subunit family. Core subunit of respiratory chain NADH dehydrogenase (Complex I) which is composed of 45 different subunits. This is the largest subunit of complex I and it is a component of the iron-sulfur (IP) fragment of the enzyme. Complex I associates with ubiquinol-cytochrome reductase complex (Complex III) to form supercomplexes. In astrocytes, less complex I is assembled into supercomplexes as compared to neurons. Interacts with MDM2. Interacts with AKAP1. [2Fe-2S] cluster is required as a cofactor. Requires [4Fe-4S] cluster as cofactor. Acetylation of Lys-84 is observed in liver mitochondria from fasted mice but not from fed mice. In terms of tissue distribution, brain. More abundant in neurons than in astrocytes (at protein level).

It localises to the mitochondrion inner membrane. The enzyme catalyses a ubiquinone + NADH + 5 H(+)(in) = a ubiquinol + NAD(+) + 4 H(+)(out). Functionally, core subunit of the mitochondrial membrane respiratory chain NADH dehydrogenase (Complex I) which catalyzes electron transfer from NADH through the respiratory chain, using ubiquinone as an electron acceptor. Essential for catalysing the entry and efficient transfer of electrons within complex I. Plays a key role in the assembly and stability of complex I and participates in the association of complex I with ubiquinol-cytochrome reductase complex (Complex III) to form supercomplexes. This Mus musculus (Mouse) protein is NADH-ubiquinone oxidoreductase 75 kDa subunit, mitochondrial (Ndufs1).